The sequence spans 145 residues: Actin-depolymerizing factor 11 (145 aa).

One can recognise an ADF-H domain in the interval serine 11 to histidine 145.

It belongs to the actin-binding proteins ADF family.

Its function is as follows. Actin-depolymerizing protein. Severs actin filaments (F-actin) and binds to actin monomers. The polypeptide is Actin-depolymerizing factor 11 (ADF11) (Oryza sativa subsp. japonica (Rice)).